Here is a 290-residue protein sequence, read N- to C-terminus: Lipoyl synthase (290 aa).

C44, C49, C55, C70, C74, C77, and S282 together coordinate [4Fe-4S] cluster. The Radical SAM core domain occupies 56–271; the sequence is WGEGTATFMI…ELLGKEMGFR (216 aa).

The protein belongs to the radical SAM superfamily. Lipoyl synthase family. It depends on [4Fe-4S] cluster as a cofactor.

Its subcellular location is the cytoplasm. It catalyses the reaction [[Fe-S] cluster scaffold protein carrying a second [4Fe-4S](2+) cluster] + N(6)-octanoyl-L-lysyl-[protein] + 2 oxidized [2Fe-2S]-[ferredoxin] + 2 S-adenosyl-L-methionine + 4 H(+) = [[Fe-S] cluster scaffold protein] + N(6)-[(R)-dihydrolipoyl]-L-lysyl-[protein] + 4 Fe(3+) + 2 hydrogen sulfide + 2 5'-deoxyadenosine + 2 L-methionine + 2 reduced [2Fe-2S]-[ferredoxin]. It participates in protein modification; protein lipoylation via endogenous pathway; protein N(6)-(lipoyl)lysine from octanoyl-[acyl-carrier-protein]: step 2/2. Its function is as follows. Catalyzes the radical-mediated insertion of two sulfur atoms into the C-6 and C-8 positions of the octanoyl moiety bound to the lipoyl domains of lipoate-dependent enzymes, thereby converting the octanoylated domains into lipoylated derivatives. This is Lipoyl synthase from Flavobacterium psychrophilum (strain ATCC 49511 / DSM 21280 / CIP 103535 / JIP02/86).